The following is a 67-amino-acid chain: Large ribosomal subunit protein bL35 (67 aa).

Over residues 1-16 (MPKMKTKSSAKKRFRV) the composition is skewed to basic residues. The disordered stretch occupies residues 1-23 (MPKMKTKSSAKKRFRVRPGGTVK).

This sequence belongs to the bacterial ribosomal protein bL35 family.

The polypeptide is Large ribosomal subunit protein bL35 (Variovorax paradoxus (strain S110)).